The sequence spans 153 residues: Ribosome maturation factor RimP (153 aa).

The protein belongs to the RimP family.

It localises to the cytoplasm. Its function is as follows. Required for maturation of 30S ribosomal subunits. The polypeptide is Ribosome maturation factor RimP (Psychromonas ingrahamii (strain DSM 17664 / CCUG 51855 / 37)).